A 320-amino-acid polypeptide reads, in one-letter code: GPI-specific phospholipase A2-like PGAP3 (320 aa).

A signal peptide spans 1–23 (MAKRTAPLLLLTLAVGLAGGSQG). At 24–98 (DREPVYRDCV…QFHGKWPFSR (75 aa)) the chain is on the lumenal side. An N-linked (GlcNAc...) asparagine glycan is attached at asparagine 40. Residues 99–119 (FLFIQEPASAVASLLNGLASL) form a helical membrane-spanning segment. Topologically, residues 120–135 (VMLCRYRASVPASSPM) are cytoplasmic. Residues 136–156 (YHTCMAFAWVSLNAWFWSTVF) form a helical membrane-spanning segment. Over 157–169 (HTRDTDLTEKMDY) the chain is Lumenal. Residues 170–190 (FCASAVILHSVYLCCVRTVGL) form a helical membrane-spanning segment. At 191 to 198 (QHPSVASA) the chain is on the cytoplasmic side. A helical transmembrane segment spans residues 199–219 (FGALLLLLLTGHISYLSLVHF). Over 220–223 (DYGY) the chain is Lumenal. The helical transmembrane segment at 224–244 (NMMANVAIGLVNLAWWLVWCL) threads the bilayer. Residues 245-257 (RNRQRLPHTRRCM) are Cytoplasmic-facing. Residues 258–278 (VVVVLLQGLSLLELLDFPPLF) form a helical membrane-spanning segment. A topological domain (lumenal) is located at residue tryptophan 279. Residues 280–299 (VLDAHAIWHISTIPVHTLFF) traverse the membrane as a helical segment. Over 300–320 (RFLEDDSLYLLKESGAMFKLD) the chain is Cytoplasmic.

The protein belongs to the PGAP3 family.

The protein localises to the golgi apparatus membrane. Its function is as follows. Involved in the fatty acid remodeling steps of GPI-anchor maturation where the unsaturated acyl chain at sn-2 of inositol phosphate is replaced by a saturated stearoyl chain. May catalyze the first step of the fatty acid remodeling, by removing the unsaturated acyl chain at sn-2 of inositol phosphate, generating a lyso-GPI intermediate. The fatty acid remodeling steps is critical for the integration of GPI-APs into lipid rafts. The chain is GPI-specific phospholipase A2-like PGAP3 from Mus musculus (Mouse).